The primary structure comprises 401 residues: Acetylornithine aminotransferase (401 aa).

Pyridoxal 5'-phosphate contacts are provided by residues 121 to 122 (GA) and Phe154. Arg157 lines the N(2)-acetyl-L-ornithine pocket. Pyridoxal 5'-phosphate is bound at residue 239 to 242 (DEVQ). Lys268 bears the N6-(pyridoxal phosphate)lysine mark. Ser296 contacts N(2)-acetyl-L-ornithine. Thr297 is a pyridoxal 5'-phosphate binding site.

The protein belongs to the class-III pyridoxal-phosphate-dependent aminotransferase family. ArgD subfamily. Homodimer. The cofactor is pyridoxal 5'-phosphate.

It is found in the cytoplasm. The catalysed reaction is N(2)-acetyl-L-ornithine + 2-oxoglutarate = N-acetyl-L-glutamate 5-semialdehyde + L-glutamate. It functions in the pathway amino-acid biosynthesis; L-arginine biosynthesis; N(2)-acetyl-L-ornithine from L-glutamate: step 4/4. In Myxococcus xanthus, this protein is Acetylornithine aminotransferase.